Reading from the N-terminus, the 386-residue chain is Dual-specificity RNA methyltransferase RlmN (386 aa).

The Proton acceptor role is filled by glutamate 96. In terms of domain architecture, Radical SAM core spans 102–340 (ENDRATLCVS…VITRRTRGED (239 aa)). A disulfide bridge connects residues cysteine 109 and cysteine 345. Residues cysteine 116, cysteine 120, and cysteine 123 each contribute to the [4Fe-4S] cluster site. Residues 170–171 (GE), serine 202, 224–226 (SIH), and asparagine 302 contribute to the S-adenosyl-L-methionine site. Cysteine 345 (S-methylcysteine intermediate) is an active-site residue.

The protein belongs to the radical SAM superfamily. RlmN family. [4Fe-4S] cluster is required as a cofactor.

The protein resides in the cytoplasm. It catalyses the reaction adenosine(2503) in 23S rRNA + 2 reduced [2Fe-2S]-[ferredoxin] + 2 S-adenosyl-L-methionine = 2-methyladenosine(2503) in 23S rRNA + 5'-deoxyadenosine + L-methionine + 2 oxidized [2Fe-2S]-[ferredoxin] + S-adenosyl-L-homocysteine. It carries out the reaction adenosine(37) in tRNA + 2 reduced [2Fe-2S]-[ferredoxin] + 2 S-adenosyl-L-methionine = 2-methyladenosine(37) in tRNA + 5'-deoxyadenosine + L-methionine + 2 oxidized [2Fe-2S]-[ferredoxin] + S-adenosyl-L-homocysteine. Its function is as follows. Specifically methylates position 2 of adenine 2503 in 23S rRNA and position 2 of adenine 37 in tRNAs. m2A2503 modification seems to play a crucial role in the proofreading step occurring at the peptidyl transferase center and thus would serve to optimize ribosomal fidelity. This chain is Dual-specificity RNA methyltransferase RlmN, found in Colwellia psychrerythraea (strain 34H / ATCC BAA-681) (Vibrio psychroerythus).